The primary structure comprises 135 residues: Large ribosomal subunit protein uL16c (135 aa).

It belongs to the universal ribosomal protein uL16 family. Part of the 50S ribosomal subunit.

It is found in the plastid. The protein localises to the chloroplast. The polypeptide is Large ribosomal subunit protein uL16c (Populus alba (White poplar)).